A 544-amino-acid polypeptide reads, in one-letter code: Apolipoprotein N-acyltransferase 1 (544 aa).

6 consecutive transmembrane segments (helical) span residues 30–50 (LNLN…FLLL), 57–79 (FSFL…WIIF), 91–111 (KYCI…SYFS), 115–135 (FIFQ…GFLG), 157–177 (IFGV…SASF), and 197–217 (PMMI…FTKI). Residues 225–501 (ARIALVQPNR…KDILVADVTV (277 aa)) enclose the CN hydrolase domain. The Proton acceptor role is filled by E272. Residue K360 is part of the active site. The active-site Nucleophile is C412. A helical transmembrane segment spans residues 514 to 534 (GDFFGVLCTIVLILNLCFIII).

It belongs to the CN hydrolase family. Apolipoprotein N-acyltransferase subfamily.

It localises to the cell inner membrane. It catalyses the reaction N-terminal S-1,2-diacyl-sn-glyceryl-L-cysteinyl-[lipoprotein] + a glycerophospholipid = N-acyl-S-1,2-diacyl-sn-glyceryl-L-cysteinyl-[lipoprotein] + a 2-acyl-sn-glycero-3-phospholipid + H(+). It participates in protein modification; lipoprotein biosynthesis (N-acyl transfer). Catalyzes the phospholipid dependent N-acylation of the N-terminal cysteine of apolipoprotein, the last step in lipoprotein maturation. This Treponema denticola (strain ATCC 35405 / DSM 14222 / CIP 103919 / JCM 8153 / KCTC 15104) protein is Apolipoprotein N-acyltransferase 1.